We begin with the raw amino-acid sequence, 392 residues long: tRNA (guanine-N(7)-)-methyltransferase (392 aa).

Glu-123, Glu-148, and Asp-175 together coordinate S-adenosyl-L-methionine. Substrate-binding residues include Lys-201 and Asp-231.

This sequence belongs to the class I-like SAM-binding methyltransferase superfamily. TrmB family.

The catalysed reaction is guanosine(46) in tRNA + S-adenosyl-L-methionine = N(7)-methylguanosine(46) in tRNA + S-adenosyl-L-homocysteine. The protein operates within tRNA modification; N(7)-methylguanine-tRNA biosynthesis. Its function is as follows. Catalyzes the formation of N(7)-methylguanine at position 46 (m7G46) in tRNA. The protein is tRNA (guanine-N(7)-)-methyltransferase of Campylobacter jejuni subsp. jejuni serotype O:6 (strain 81116 / NCTC 11828).